The chain runs to 142 residues: FAD synthase (142 aa).

Residues 9-10 (VF), 14-17 (HLGH), aspartate 93, and tyrosine 120 contribute to the ATP site.

It belongs to the archaeal FAD synthase family. Homodimer. A divalent metal cation is required as a cofactor.

It carries out the reaction FMN + ATP + H(+) = FAD + diphosphate. It participates in cofactor biosynthesis; FAD biosynthesis; FAD from FMN: step 1/1. Catalyzes the transfer of the AMP portion of ATP to flavin mononucleotide (FMN) to produce flavin adenine dinucleotide (FAD) coenzyme. This chain is FAD synthase, found in Thermoplasma acidophilum (strain ATCC 25905 / DSM 1728 / JCM 9062 / NBRC 15155 / AMRC-C165).